Here is a 230-residue protein sequence, read N- to C-terminus: Large ribosomal subunit protein uL1 (230 aa).

This sequence belongs to the universal ribosomal protein uL1 family. Part of the 50S ribosomal subunit.

In terms of biological role, binds directly to 23S rRNA. The L1 stalk is quite mobile in the ribosome, and is involved in E site tRNA release. Protein L1 is also a translational repressor protein, it controls the translation of the L11 operon by binding to its mRNA. This Bifidobacterium longum subsp. infantis (strain ATCC 15697 / DSM 20088 / JCM 1222 / NCTC 11817 / S12) protein is Large ribosomal subunit protein uL1.